Consider the following 346-residue polypeptide: Deoxyhypusine hydroxylase (346 aa).

HEAT-like PBS-type repeat units lie at residues 71–100 (VLLR…LNDT), 104–133 (LMVR…LNDE), 213–242 (LKLR…LIKD), 246–275 (AIFR…LQNV), and 279–320 (EMVR…SKDA). Positions 75, 108, and 109 each coordinate Fe cation. Residues His250, His283, and Glu284 each contribute to the Fe cation site.

The protein belongs to the deoxyhypusine hydroxylase family. Fe(2+) serves as cofactor.

It carries out the reaction [eIF5A protein]-deoxyhypusine + AH2 + O2 = [eIF5A protein]-hypusine + A + H2O. It functions in the pathway protein modification; eIF5A hypusination. Its function is as follows. Catalyzes the hydroxylation of the N(6)-(4-aminobutyl)-L-lysine intermediate produced by deoxyhypusine synthase/DHPS on a critical lysine of the eukaryotic translation initiation factor 5A/eIF-5A. This is the second step of the post-translational modification of that lysine into an unusual amino acid residue named hypusine. Hypusination is unique to mature eIF-5A factor and is essential for its function. The chain is Deoxyhypusine hydroxylase from Plasmodium vivax (strain Salvador I).